Reading from the N-terminus, the 202-residue chain is Oligoribonuclease (202 aa).

The Exonuclease domain maps to 2-166 (LVWIDCEMTG…ADIQESIEEL (165 aa)). The active site involves Tyr-123.

The protein belongs to the oligoribonuclease family.

Its subcellular location is the cytoplasm. Functionally, 3'-to-5' exoribonuclease specific for small oligoribonucleotides. In Cutibacterium acnes (strain DSM 16379 / KPA171202) (Propionibacterium acnes), this protein is Oligoribonuclease.